Consider the following 279-residue polypeptide: MKKVIILIFMLSTSLLYNCKNQDNEKIVSIGGSTTVSPILDEMILRYNKINNNTKVTYDAQGSSVGINGLFNKIYKIAISSRDLTKEEIEQGAKETVFAYDALIFITSPEIKITNITEENLAKILNGEIQNWKQVGGPDAKINFINRDSSSGSYSSIKDLLLNKIFKTHEEAQFRQDGIVVKSNGEVIEKTSLTPHSIGYIGLGYAKNSIEKGLNILSVNSTYPTKETINSNKYTIKRNLIIVTNNKYEDKSVTQFIDFMTSSTGQDIVEEQGFLGIKT.

The N-terminal stretch at Met1–Asn18 is a signal peptide. Residue Cys19 is the site of N-palmitoyl cysteine attachment. A lipid anchor (S-diacylglycerol cysteine) is attached at Cys19. Phosphate-binding positions include Ser33–Thr35, Ser63, and Ser151–Ser153.

It belongs to the PstS family. As to quaternary structure, monomer (in vitro). The complex is composed of two ATP-binding proteins (PstB), two transmembrane proteins (PstC and PstA) and a solute-binding protein (PstS).

It localises to the cell membrane. Functionally, binds inorganic phosphate with a Kd of 1.2 uM. Part of the ABC transporter complex PstSACB involved in phosphate import. This chain is Phosphate-binding protein PstS, found in Borreliella burgdorferi (strain ATCC 35210 / DSM 4680 / CIP 102532 / B31) (Borrelia burgdorferi).